A 142-amino-acid polypeptide reads, in one-letter code: Hemoglobin subunit alpha-A (142 aa).

Residues 2 to 142 form the Globin domain; it reads VLSAADKTNV…VGAVLTAKYR (141 aa). Histidine 59 is an O2 binding site. Residue histidine 88 coordinates heme b.

It belongs to the globin family. Heterotetramer of two alpha chains and two beta chains. Red blood cells.

Involved in oxygen transport from the lung to the various peripheral tissues. The chain is Hemoglobin subunit alpha-A (HBAA) from Anas platyrhynchos platyrhynchos (Northern mallard).